The following is a 715-amino-acid chain: MTTTSAFMLSVRLDNVAVVAIDVPGEKVNTLKAEFAAQVRAILKQIRENKALQGVVFISAKADNFIAGADINMIGHCQNAQEAETLARQGQQLMAEIQALPVPVIAAIHGACLGGGLEMALACHRRICTDDVKTVLGLPEVQLGLLPGSGGTQRLPRLVGVSTALDMILTGKQLRARQALKAGLVDDVVPQTILLEAAVELAKKERLAQRTLPVRERILAGPLGRALLFRLVRKKTAQKTQGNYPATERIIDVIETGLAQGSSSGYDAEARAFGELAMTPQSQALRAVFFASTEVKKDPGSDAPPGPLNSVGILGGGLMGGGIAWVTACKGGLPVRIKDINTQGINHALKYSWDLLETKVRRRHIKASERDKQLALISGSTDYRGFSHRDLVIEAVFEDLPLKQQMVAEVEQNCATHTIFASNTSSLPIGDIAANAARPEQVIGLHFFSPVEKMPLVEVIPHASTSAQTIATTVKLAKKQGKTPIVVSDKAGFYVNRILAPYINEAIRMLTEGERVEHIDAALVKFGFPVGPIQLLDEVGIDTGTKIIPVLEAAYGERFSAPANVVASILNDDRKGRKNGRGFYLYGEKGRKSKKQVDPAIYKLIGVQGQSRLSAQQVAERCVMLMLNEAARCFDEKVIRSARDGDIGAVFGIGFPPFLGGPFRYMDALGPGEMVATLQRLAALYGPRYAPCEQLVRMAERREHFWTNGETDQGN.

The interval 1 to 190 is enoyl-CoA hydratase; sequence MTTTSAFMLS…KAGLVDDVVP (190 aa). The 3-hydroxyacyl-CoA dehydrogenase stretch occupies residues 306–714; sequence GPLNSVGILG…FWTNGETDQG (409 aa).

In the N-terminal section; belongs to the enoyl-CoA hydratase/isomerase family. This sequence in the central section; belongs to the 3-hydroxyacyl-CoA dehydrogenase family. Heterotetramer of two alpha chains (FadJ) and two beta chains (FadI).

It is found in the cytoplasm. The enzyme catalyses a (3S)-3-hydroxyacyl-CoA = a (2E)-enoyl-CoA + H2O. The catalysed reaction is a 4-saturated-(3S)-3-hydroxyacyl-CoA = a (3E)-enoyl-CoA + H2O. It carries out the reaction a (3S)-3-hydroxyacyl-CoA + NAD(+) = a 3-oxoacyl-CoA + NADH + H(+). It catalyses the reaction (3S)-3-hydroxybutanoyl-CoA = (3R)-3-hydroxybutanoyl-CoA. Its pathway is lipid metabolism; fatty acid beta-oxidation. Functionally, catalyzes the formation of a hydroxyacyl-CoA by addition of water on enoyl-CoA. Also exhibits 3-hydroxyacyl-CoA epimerase and 3-hydroxyacyl-CoA dehydrogenase activities. The sequence is that of Fatty acid oxidation complex subunit alpha from Salmonella typhi.